A 239-amino-acid chain; its full sequence is Ribosomal RNA small subunit methyltransferase G (239 aa).

Residues Gly-77, Phe-82, 128–129 (AE), and Arg-146 contribute to the S-adenosyl-L-methionine site. A disordered region spans residues 216–239 (KRRQTSKKYPRKPGTPNKSPLVES).

It belongs to the methyltransferase superfamily. RNA methyltransferase RsmG family.

The protein localises to the cytoplasm. Functionally, specifically methylates the N7 position of guanine in position 535 of 16S rRNA. This is Ribosomal RNA small subunit methyltransferase G from Staphylococcus epidermidis (strain ATCC 35984 / DSM 28319 / BCRC 17069 / CCUG 31568 / BM 3577 / RP62A).